The sequence spans 186 residues: Elongation factor P (186 aa).

Belongs to the elongation factor P family.

The protein resides in the cytoplasm. It functions in the pathway protein biosynthesis; polypeptide chain elongation. In terms of biological role, involved in peptide bond synthesis. Stimulates efficient translation and peptide-bond synthesis on native or reconstituted 70S ribosomes in vitro. Probably functions indirectly by altering the affinity of the ribosome for aminoacyl-tRNA, thus increasing their reactivity as acceptors for peptidyl transferase. In Brucella ovis (strain ATCC 25840 / 63/290 / NCTC 10512), this protein is Elongation factor P.